A 273-amino-acid chain; its full sequence is Putative pyruvate, phosphate dikinase regulatory protein (273 aa).

149–156 (GPSRTSKT) provides a ligand contact to ADP.

It belongs to the pyruvate, phosphate/water dikinase regulatory protein family. PDRP subfamily.

It carries out the reaction N(tele)-phospho-L-histidyl/L-threonyl-[pyruvate, phosphate dikinase] + ADP = N(tele)-phospho-L-histidyl/O-phospho-L-threonyl-[pyruvate, phosphate dikinase] + AMP + H(+). It catalyses the reaction N(tele)-phospho-L-histidyl/O-phospho-L-threonyl-[pyruvate, phosphate dikinase] + phosphate + H(+) = N(tele)-phospho-L-histidyl/L-threonyl-[pyruvate, phosphate dikinase] + diphosphate. Its function is as follows. Bifunctional serine/threonine kinase and phosphorylase involved in the regulation of the pyruvate, phosphate dikinase (PPDK) by catalyzing its phosphorylation/dephosphorylation. This chain is Putative pyruvate, phosphate dikinase regulatory protein, found in Rickettsia felis (strain ATCC VR-1525 / URRWXCal2) (Rickettsia azadi).